Consider the following 314-residue polypeptide: ATP synthase gamma chain (314 aa).

It belongs to the ATPase gamma chain family. F-type ATPases have 2 components, CF(1) - the catalytic core - and CF(0) - the membrane proton channel. CF(1) has five subunits: alpha(3), beta(3), gamma(1), delta(1), epsilon(1). CF(0) has three main subunits: a, b and c.

The protein resides in the cell membrane. Produces ATP from ADP in the presence of a proton gradient across the membrane. The gamma chain is believed to be important in regulating ATPase activity and the flow of protons through the CF(0) complex. The polypeptide is ATP synthase gamma chain (Limosilactobacillus reuteri (strain DSM 20016) (Lactobacillus reuteri)).